Reading from the N-terminus, the 51-residue chain is Mitochondrial import receptor subunit TOM5 homolog (51 aa).

An N-acetylmethionine modification is found at M1. A Glycyl lysine isopeptide (Lys-Gly) (interchain with G-Cter in SUMO2) cross-link involves residue K10. A helical transmembrane segment spans residues 27–45 (SIRNFLIYVALLRVTPYIL).

This sequence belongs to the Tom5 family. In terms of assembly, forms part of the preprotein translocase complex of the outer mitochondrial membrane (TOM complex) which consists of at least 7 different proteins (TOMM5, TOMM6, TOMM7, TOMM20, TOMM22, TOMM40 and TOMM70).

It localises to the mitochondrion outer membrane. The chain is Mitochondrial import receptor subunit TOM5 homolog from Mus musculus (Mouse).